The sequence spans 436 residues: D-amino acid dehydrogenase (436 aa).

Residue 3 to 17 (IVVLGAGVVGVTSAY) coordinates FAD.

This sequence belongs to the DadA oxidoreductase family. It depends on FAD as a cofactor.

The catalysed reaction is a D-alpha-amino acid + A + H2O = a 2-oxocarboxylate + AH2 + NH4(+). Its pathway is amino-acid degradation; D-alanine degradation; NH(3) and pyruvate from D-alanine: step 1/1. Oxidative deamination of D-amino acids. The polypeptide is D-amino acid dehydrogenase (Cereibacter sphaeroides (strain ATCC 17029 / ATH 2.4.9) (Rhodobacter sphaeroides)).